The primary structure comprises 274 residues: HTH-type transcriptional regulator GadX (274 aa).

The 98-residue stretch at 145–242 (TRVCTVINNN…GMTPTEYQER (98 aa)) folds into the HTH araC/xylS-type domain. DNA-binding regions (H-T-H motif) lie at residues 162–183 (ARIA…REEE) and 209–232 (IKRV…RNYY).

As to quaternary structure, homodimer.

In terms of biological role, positively regulates the expression of about fifteen genes involved in acid resistance such as gadA, gadB and gadC. Depending on the conditions (growth phase and medium), can repress gadW. The sequence is that of HTH-type transcriptional regulator GadX (gadX) from Escherichia coli (strain K12).